Here is a 1348-residue protein sequence, read N- to C-terminus: Kinesin-like protein KIF7 (1348 aa).

One can recognise a Kinesin motor domain in the interval 15–349 (PVRVALRVRP…LNYASRAQNI (335 aa)). Residue 94 to 101 (GQTGSGKT) coordinates ATP. The interval 358 to 479 (HPEAERVPEE…EDQAAQGTSG (122 aa)) is interaction with DLG5. The interval 358 to 1211 (HPEAERVPEE…LGRHMWINQE (854 aa)) is interaction with SMO. 2 disordered regions span residues 451–486 (RSTLSSASGPDSGIESAPAEDQAAQGTSGRKGDEGT) and 607–674 (AQAD…VCPE). A coiled-coil region spans residues 480–542 (RKGDEGTQQL…ELRLRLELAQ (63 aa)). Positions 620 to 636 (SEEEGEEEEEEEEEEEE) are enriched in acidic residues. 2 coiled-coil regions span residues 698–1057 (APAA…IEAL) and 1109–1211 (FDKV…INQE). Phosphoserine is present on S903. Disordered regions lie at residues 1288–1314 (LCSEQGSSEESRVRETTEPPVGRVLPM) and 1328–1348 (KPRWEPRRTSPGMIDVRKNPL).

Belongs to the TRAFAC class myosin-kinesin ATPase superfamily. Kinesin family. Can form homodimers and interacts with microtubules. Interacts with GLI1 and SMO. Interacts with GLI2, GLI3 and SUFU. Interacts with NPHP1. Interacts with SMO and DLG5 (via PDZ4 or guanylate kinase-like domain). In terms of processing, polyubiquitinated by UBR3. Expressed in heart, lung, liver, kidney, testis, spleen and cerebellum.

The protein resides in the cell projection. It is found in the cilium. It localises to the cytoplasm. Its subcellular location is the cytoskeleton. The protein localises to the cilium basal body. In terms of biological role, essential for hedgehog signaling regulation: acts both as a negative and a positive regulator of sonic hedgehog (Shh) and Indian hedgehog (Ihh) pathways, acting downstream of SMO, through both SUFU-dependent and -independent mechanisms. Involved in the regulation of microtubular dynamics. Required for proper organization of the ciliary tip and control of ciliary localization of SUFU-GLI2 complexes. Required for localization of GLI3 to cilia in response to Shh. Negatively regulates Shh signaling by preventing inappropriate activation of the transcriptional activator GLI2 in the absence of ligand. Positively regulates Shh signaling by preventing the processing of the transcription factor GLI3 into its repressor form. In keratinocytes, promotes the dissociation of SUFU-GLI2 complexes, GLI2 nuclear translocation and Shh signaling activation. Involved in the regulation of epidermal differentiation and chondrocyte development. In Mus musculus (Mouse), this protein is Kinesin-like protein KIF7 (Kif7).